A 441-amino-acid polypeptide reads, in one-letter code: Collagen alpha-1(XXVI) chain (441 aa).

A signal peptide spans 1 to 20 (MKLALLLPWACCCLCGSALA). In terms of domain architecture, EMI spans 52 to 128 (RRHWCHHTVT…PGFTGSNCDE (77 aa)). Disulfide bonds link cysteine 56-cysteine 118, cysteine 83-cysteine 89, and cysteine 117-cysteine 126. The N-linked (GlcNAc...) asparagine glycan is linked to asparagine 70. N-linked (GlcNAc...) asparagine glycosylation occurs at asparagine 132. 2 disordered regions span residues 156-362 (AERP…AEGE) and 390-441 (PLAS…SSRK). 2 consecutive Collagen-like domains span residues 199-267 (GPAG…PGPS) and 302-355 (GVPG…EGEK). Composition is skewed to pro residues over residues 200-215 (PAGP…PAGP), 231-243 (AGPP…PGPR), 252-269 (PGPP…PSPN), and 306-327 (PRGP…PPGT). Basic and acidic residues predominate over residues 348–357 (VKGEEGEKAA).

Homotrimer or heterotrimer. Post-translationally, hydroxylated on proline residues.

The protein localises to the secreted. Its subcellular location is the extracellular space. The protein resides in the extracellular matrix. The sequence is that of Collagen alpha-1(XXVI) chain (COL26A1) from Homo sapiens (Human).